The primary structure comprises 200 residues: 3-isopropylmalate dehydratase small subunit (200 aa).

It belongs to the LeuD family. LeuD type 1 subfamily. In terms of assembly, heterodimer of LeuC and LeuD.

It catalyses the reaction (2R,3S)-3-isopropylmalate = (2S)-2-isopropylmalate. The protein operates within amino-acid biosynthesis; L-leucine biosynthesis; L-leucine from 3-methyl-2-oxobutanoate: step 2/4. In terms of biological role, catalyzes the isomerization between 2-isopropylmalate and 3-isopropylmalate, via the formation of 2-isopropylmaleate. This is 3-isopropylmalate dehydratase small subunit from Yersinia pseudotuberculosis serotype I (strain IP32953).